The chain runs to 344 residues: Heme A synthase (344 aa).

9 helical membrane-spanning segments follow: residues 20 to 40 (IAWW…VGGL), 104 to 124 (RFLG…FVVT), 135 to 155 (LIFL…MVMS), 170 to 190 (AHLG…LDLL), 205 to 225 (AAAI…VAGI), 233 to 253 (TWPL…TPVW), 265 to 285 (FQHR…WWAA), 296 to 316 (WLAV…LWVV), and 317 to 337 (PIPL…VAVW). Heme is bound at residue histidine 267. Histidine 324 serves as a coordination point for heme.

Belongs to the COX15/CtaA family. Type 2 subfamily. In terms of assembly, interacts with CtaB. Heme b is required as a cofactor.

It is found in the cell membrane. The catalysed reaction is Fe(II)-heme o + 2 A + H2O = Fe(II)-heme a + 2 AH2. It participates in porphyrin-containing compound metabolism; heme A biosynthesis; heme A from heme O: step 1/1. In terms of biological role, catalyzes the conversion of heme O to heme A by two successive hydroxylations of the methyl group at C8. The first hydroxylation forms heme I, the second hydroxylation results in an unstable dihydroxymethyl group, which spontaneously dehydrates, resulting in the formyl group of heme A. This Parvibaculum lavamentivorans (strain DS-1 / DSM 13023 / NCIMB 13966) protein is Heme A synthase.